The primary structure comprises 285 residues: 2-dehydro-3-deoxyphosphooctonate aldolase (285 aa).

The protein belongs to the KdsA family.

It is found in the cytoplasm. It carries out the reaction D-arabinose 5-phosphate + phosphoenolpyruvate + H2O = 3-deoxy-alpha-D-manno-2-octulosonate-8-phosphate + phosphate. The protein operates within carbohydrate biosynthesis; 3-deoxy-D-manno-octulosonate biosynthesis; 3-deoxy-D-manno-octulosonate from D-ribulose 5-phosphate: step 2/3. It functions in the pathway bacterial outer membrane biogenesis; lipopolysaccharide biosynthesis. The protein is 2-dehydro-3-deoxyphosphooctonate aldolase of Acidovorax sp. (strain JS42).